A 666-amino-acid polypeptide reads, in one-letter code: ATP-dependent RNA helicase MSS116, mitochondrial (666 aa).

Residues 1–22 (MLRHCSLGLVTTQISAIAPLRL) constitute a mitochondrion transit peptide. Over residues 38 to 60 (RDRRSSRSREDKPYNSRTRRFDD) the composition is skewed to basic and acidic residues. A disordered region spans residues 38-131 (RDRRSSRSRE…KSYSKGGNTS (94 aa)). The segment covering 120 to 131 (NTKSYSKGGNTS) has biased composition (polar residues). The Q motif motif lies at 159–187 (SLLEKNVISRDLYDSISRMGFEQLTPVQQ). Positions 192–379 (PIITNSDSDI…NDIMNKEECL (188 aa)) constitute a Helicase ATP-binding domain. 205–212 (AKTGTGKT) lines the ATP pocket. The short motif at 320–323 (DEAD) is the DEAD box element. The 153-residue stretch at 408 to 560 (NLYAAIEHIR…NIRKFEAQPH (153 aa)) folds into the Helicase C-terminal domain.

Belongs to the DEAD box helicase family. DDX18/HAS1 subfamily.

The protein localises to the mitochondrion matrix. It carries out the reaction ATP + H2O = ADP + phosphate + H(+). ATP-dependent RNA helicase required for mitochondrial splicing of group I and II introns. Also required for efficient mitochondrial translation. This Candida glabrata (strain ATCC 2001 / BCRC 20586 / JCM 3761 / NBRC 0622 / NRRL Y-65 / CBS 138) (Yeast) protein is ATP-dependent RNA helicase MSS116, mitochondrial (MSS116).